Consider the following 303-residue polypeptide: Glycine--tRNA ligase alpha subunit (303 aa).

Belongs to the class-II aminoacyl-tRNA synthetase family. As to quaternary structure, tetramer of two alpha and two beta subunits.

It is found in the cytoplasm. It catalyses the reaction tRNA(Gly) + glycine + ATP = glycyl-tRNA(Gly) + AMP + diphosphate. This is Glycine--tRNA ligase alpha subunit from Syntrophomonas wolfei subsp. wolfei (strain DSM 2245B / Goettingen).